We begin with the raw amino-acid sequence, 356 residues long: Viral cathepsin (356 aa).

Residues 1 to 40 form the signal peptide; the sequence is MYANALVCLNPSFIKLQFHIVCTMNIIGIVTLALCSAASA. The propeptide at 41–144 is activation peptide; it reads ADEGAAYNLQ…IILNQPPDKG (104 aa). Intrachain disulfides connect cysteine 165/cysteine 206, cysteine 199/cysteine 239, and cysteine 295/cysteine 343. Cysteine 168 is a catalytic residue. Catalysis depends on residues histidine 302 and asparagine 322.

Belongs to the peptidase C1 family. Post-translationally, synthesized as an inactive proenzyme and activated by proteolytic removal of the inhibitory propeptide.

The enzyme catalyses Endopeptidase of broad specificity, hydrolyzing substrates of both cathepsin L and cathepsin B.. Cysteine protease that plays an essential role in host liquefaction to facilitate horizontal transmission of the virus. May participate in the degradation of foreign protein expressed by the baculovirus system. The sequence is that of Viral cathepsin (VCATH) from Lepidoptera (butterflies and moths).